Consider the following 402-residue polypeptide: LIM/homeobox protein Lhx5 (402 aa).

LIM zinc-binding domains lie at 3–61 (AHCA…RRFG) and 62–125 (TKCA…ASSL). 3 disordered regions span residues 133 to 187 (VSSC…RTTI), 291 to 335 (NYDF…GHHP), and 365 to 392 (SGEV…LPHQ). Basic and acidic residues predominate over residues 151 to 167 (DESKETDHSTSSDKETA). The homeobox DNA-binding region spans 180-239 (RRGPRTTIKAKQLETLKAAFIATPKPTRHIREQLAQETGLNMRVIQVWFQNRRSKERRMK). Polar residues predominate over residues 300–319 (PSSQTQSPADSSYLQNSGPG).

In terms of assembly, interacts with ldb1 and with the N-terminus of rnf12.

The protein localises to the nucleus. In terms of biological role, probably involved in the patterning of the nervous system, in particular in the early specification of the diencephalon. The protein is LIM/homeobox protein Lhx5 (lhx5) of Xenopus laevis (African clawed frog).